The primary structure comprises 153 residues: Putative pre-16S rRNA nuclease (153 aa).

Belongs to the YqgF nuclease family.

The protein localises to the cytoplasm. Could be a nuclease involved in processing of the 5'-end of pre-16S rRNA. This chain is Putative pre-16S rRNA nuclease, found in Prochlorococcus marinus (strain AS9601).